Reading from the N-terminus, the 706-residue chain is Solute carrier organic anion transporter family member 6C1 (706 aa).

The tract at residues 1–24 (MAHVRNKKSDDKKAMVVAKEDTNK) is disordered. Over 1–94 (MAHVRNKKSD…PFVQRFNNID (94 aa)) the chain is Cytoplasmic. Residues 7-24 (KKSDDKKAMVVAKEDTNK) are compositionally biased toward basic and acidic residues. The helical transmembrane segment at 95 to 118 (GFMTLYVAAVLIHGALFAVVDMTL) threads the bilayer. At 119 to 130 (NIYQVQFSLTRT) the chain is on the extracellular side. A helical transmembrane segment spans residues 131 to 151 (EWYLMDFSDYIASFVVAIIIA). At 152 to 159 (HFGSKGNR) the chain is on the cytoplasmic side. The helical transmembrane segment at 160–180 (TRWIAASCILMGLESMLFAFP) threads the bilayer. Over 181 to 218 (FFTYEIIIPGRQSIELCMEENEKRNIICGNSVPNRSKC) the chain is Extracellular. N-linked (GlcNAc...) asparagine glycosylation occurs at Asn-214. A helical membrane pass occupies residues 219–241 (IYFHIAGQCIHGIAGMPIYILGI). The Cytoplasmic segment spans residues 242 to 253 (TFIFDHIPTSSC). A helical transmembrane segment spans residues 254-277 (GFYLAIGHSAYLIGYLLGMVGGLQ). Residues 278 to 301 (NFQPPPKEKTVEIEPAKVYQLLQS) lie on the Extracellular side of the membrane. The chain crosses the membrane as a helical span at residues 302-324 (GWWKTFLIIAAISFCVSFMMVCF). The Cytoplasmic portion of the chain corresponds to 325–374 (PTSLPGAHKLRLAKRKEPPTIDRRLKDMKIQPHLKGFLHNIWHILKNPLM). A helical membrane pass occupies residues 375–396 (LTQAICKVSEYLTFNTSLYFLP). Residues 397–410 (HHLQTQFLITPGIA) are Extracellular-facing. Residues 411–432 (SLLTGAFVLPGGIIGHFLGGLI) form a helical membrane-spanning segment. The Cytoplasmic segment spans residues 433–445 (VDRLEMTNKNKLK). Residues 446-466 (FTLVTTVVSVGLFLLIFFVEC) form a helical membrane-spanning segment. The Extracellular segment spans residues 467 to 565 (QTTTFAGINE…IAGTCDSDCL (99 aa)). Residues 485-540 (GNLTADCNEYCDCTTSLYTSICGRDEKEYFSPCFAGCKATKVSQTEKTYYNCSCIK) enclose the Kazal-like domain. N-linked (GlcNAc...) asparagine glycosylation occurs at Asn-486. 3 disulfides stabilise this stretch: Cys-491–Cys-521, Cys-497–Cys-517, and Cys-506–Cys-538. Asn-535 is a glycosylation site (N-linked (GlcNAc...) asparagine). The helical transmembrane segment at 566–589 (KLPLFFAFYFSATVFSNMCSIPVI) threads the bilayer. Residues 590–604 (SIILQSVPANFTSLS) lie on the Cytoplasmic side of the membrane. The chain crosses the membrane as a helical span at residues 605–624 (LGVTYAIVKFVASVPAPLLF). Topologically, residues 625–652 (RLSSAIACIYWDNNRCGGKERCWIYNKN) are extracellular. The helical transmembrane segment at 653–675 (ILVYEFMGIWMSSQLIIVLLNIY) threads the bilayer. Topologically, residues 676–706 (AIQIHDVVVHGEITESKTTVKDVKEQKERKA) are cytoplasmic.

It belongs to the organo anion transporter (TC 2.A.60) family. In terms of assembly, component of the CatSper complex or CatSpermasome composed of the core pore-forming members CATSPER1, CATSPER2, CATSPER3 and CATSPER4 as well as auxiliary members CATSPERB, CATSPERG2, CATSPERD, CATSPERE, CATSPERZ, C2CD6/CATSPERT, SLCO6C1, TMEM249, TMEM262 and EFCAB9. HSPA1 may be an additional auxiliary complex member. The core complex members CATSPER1, CATSPER2, CATSPER3 and CATSPER4 form a heterotetrameric channel. The auxiliary CATSPERB, CATSPERG2, CATSPERD and CATSPERE subunits form a pavilion-like structure over the pore which stabilizes the complex through interactions with CATSPER4, CATSPER3, CATSPER1 and CATSPER2 respectively. SLCO6C1 interacts with CATSPERE and TMEM262/CATSPERH interacts with CATSPERB, further stabilizing the complex. C2CD6/CATSPERT interacts at least with CATSPERD and is required for targeting the CatSper complex in the flagellar membrane.

The protein localises to the cell projection. Its subcellular location is the cilium. It localises to the flagellum membrane. Its function is as follows. Auxiliary component of the CatSper complex, a complex involved in sperm cell hyperactivation. The protein is Solute carrier organic anion transporter family member 6C1 of Mus musculus (Mouse).